Reading from the N-terminus, the 142-residue chain is Small ribosomal subunit protein uS12z (142 aa).

P61 is subject to Hydroxyproline.

The protein belongs to the universal ribosomal protein uS12 family.

The chain is Small ribosomal subunit protein uS12z (RPS23A) from Arabidopsis thaliana (Mouse-ear cress).